A 259-amino-acid polypeptide reads, in one-letter code: Thiazole synthase (259 aa).

Residue K98 is the Schiff-base intermediate with DXP of the active site. 1-deoxy-D-xylulose 5-phosphate-binding positions include G159, 185–186, and 207–208; these read AG and NS.

Belongs to the ThiG family. Homotetramer. Forms heterodimers with either ThiH or ThiS.

The protein localises to the cytoplasm. It catalyses the reaction [ThiS sulfur-carrier protein]-C-terminal-Gly-aminoethanethioate + 2-iminoacetate + 1-deoxy-D-xylulose 5-phosphate = [ThiS sulfur-carrier protein]-C-terminal Gly-Gly + 2-[(2R,5Z)-2-carboxy-4-methylthiazol-5(2H)-ylidene]ethyl phosphate + 2 H2O + H(+). Its pathway is cofactor biosynthesis; thiamine diphosphate biosynthesis. Its function is as follows. Catalyzes the rearrangement of 1-deoxy-D-xylulose 5-phosphate (DXP) to produce the thiazole phosphate moiety of thiamine. Sulfur is provided by the thiocarboxylate moiety of the carrier protein ThiS. In vitro, sulfur can be provided by H(2)S. This is Thiazole synthase from Chlorobium phaeobacteroides (strain DSM 266 / SMG 266 / 2430).